Here is a 359-residue protein sequence, read N- to C-terminus: 3-dehydroquinate synthase (359 aa).

NAD(+) is bound by residues 69–74 (DAETGK), 103–107 (GAATD), 127–128 (TT), K140, and K149. Zn(2+) contacts are provided by E182, H244, and H260.

It belongs to the sugar phosphate cyclases superfamily. Dehydroquinate synthase family. Requires Co(2+) as cofactor. It depends on Zn(2+) as a cofactor. NAD(+) serves as cofactor.

The protein resides in the cytoplasm. The catalysed reaction is 7-phospho-2-dehydro-3-deoxy-D-arabino-heptonate = 3-dehydroquinate + phosphate. It functions in the pathway metabolic intermediate biosynthesis; chorismate biosynthesis; chorismate from D-erythrose 4-phosphate and phosphoenolpyruvate: step 2/7. Catalyzes the conversion of 3-deoxy-D-arabino-heptulosonate 7-phosphate (DAHP) to dehydroquinate (DHQ). The chain is 3-dehydroquinate synthase from Corynebacterium diphtheriae (strain ATCC 700971 / NCTC 13129 / Biotype gravis).